The following is a 729-amino-acid chain: Ubiquitin carboxyl-terminal hydrolase BAP1 (729 aa).

One can recognise a UCH catalytic domain in the interval 4–235 (GWLELESDPG…IRFNLMAVVP (232 aa)). Positions 56-60 (RRSRR) match the Arg-finger motif motif. The active-site Nucleophile is the cysteine 91. The active-site Proton donor is histidine 169. Serine 292 carries the post-translational modification Phosphoserine. The tract at residues 301-351 (APAASEGNHTDGAEEAAGSCAQAPSHSPPNKPKLVVKPPGSSLNGVHPNPT) is disordered. An HBM-like motif motif is present at residues 363-366 (NHNY). Phosphoserine is present on residues serine 369 and serine 395. 2 disordered regions span residues 372 to 435 (QEEE…SADG) and 464 to 524 (SIKT…SPVT). The span at 395-409 (SDDEDDYEDDEEDDV) shows a compositional bias: acidic residues. Residues 480-524 (THSQPSPTPSNESTDTASEIGSAFNSPLRSPIRSANPTRPSSPVT) show a composition bias toward polar residues. A Phosphothreonine modification is found at threonine 493. Phosphoserine occurs at positions 521, 537, 585, and 597. Residues 575–623 (LTEGGKGSSPSIRPIQGSQGSSSPVEKEVVEATDSREKTGMVRPGEPLS) are disordered. The segment covering 582-598 (SSPSIRPIQGSQGSSSP) has biased composition (polar residues). An interaction with BRCA1 region spans residues 596 to 721 (SSPVEKEVVE…QRKPDRRKRS (126 aa)). Basic and acidic residues predominate over residues 599 to 614 (VEKEVVEATDSREKTG). A coiled-coil region spans residues 636-656 (LKCVEAEIANYEACLKEEVEK). The interaction with YY1 stretch occupies residues 642–686 (EIANYEACLKEEVEKRKKFKIDDQRRTHNYDEFICTFISMLAQEG). The region spanning 670-698 (NYDEFICTFISMLAQEGMLANLVEQNISV) is the ULD domain. The segment at 699–701 (RRR) is interaction with nucleosomal DNA forming a DNA clamp with ASXL1. A Classical bipartite Nuclear localization signal (NLS) motif is present at residues 699–722 (RRRQGVSIGRLHKQRKPDRRKRSR). The disordered stretch occupies residues 703-729 (GVSIGRLHKQRKPDRRKRSRPYKAKRQ). The segment at 713–729 (RKPDRRKRSRPYKAKRQ) is positively charged C-terminal extension (CTE). Positions 717–724 (RRKRSRPY) match the Non-classical PY-nuclear localization signal (PY-NLS) motif.

This sequence belongs to the peptidase C12 family. BAP1 subfamily. Core component of the polycomb repressive deubiquitinase (PR-DUB) complex, at least composed of BAP1, one of ASXL1, ASXL2 or (probably) ASXL3, and one of MBD5 or MBD6. The PR-DUB core associates with a number of accessory proteins, including FOXK1, FOXK2, KDM1B, HCFC1, YY1 and OGT; KDM1B specifically associates with ASXL2 PR-DUB complexes. The BAP1 deubiquitinase activity is not required for PR-DUB assembly. Homodimerizes (via coiled-coil hinge-region between the UCH and ULD domains) to mediate assembly of 2 copies of the BAP1-ASXL heterodimer into a bisymmetric tetramer; dimerization enhances association with nucleosomes. The PR-DUB complex associates with nucleosomes to mediate deubiquitination of 'lys-120' of histone H2AK118ub1 substrates; the association requires the positively charged C-terminal tail of BAP1. Interacts (via ULD domain) with ASXL1 (via DEUBAD domain); the interaction is direct and forms a ubiquitin binding cleft. The interaction with ASXL1 stabilizes BAP1 but is not required for nucleosome binding. Associates (via C-terminus) with nucleosome and chromatosome complexes through direct interaction with DNA and the histone3/4 dimer; this association displaces the histone-2A C-terminal tail, extending and orienting the H2AK118ub1 substrate towards the BAP1 deubiquitinase active site. Also interacts (via arginine finger) directly with the histone H2A-H2B acidic patch; this interaction is not critical for nucleosome-chromatosome association but may play a role in orienting the H2AK118ub1 substrate towards the PR-DUB complex active site. Interacts with BRCA1 (via the RING finger). Interacts (via HBM-like motif) with HCFC1. Interacts (via a C-terminal region overlapping the ULD domain) with YY1; the interaction is direct and requires the interaction with HCFC1. Interacts (when phosphorylated at Thr-493) with FOXK1. Interacts (when phosphorylated at Thr-493) with FOXK2; leading to recruitment of the PR-DUB complex and repression of FOXK2 target genes. Interacts (via non-classical PY-NLS) with TNPO1/transportin-1 (via HEAT repeats 8-12); the interaction is direct, mediates BAP1 nuclear localization and disrupts BAP1 homodimerization. Interacts (via C-terminus) with KPNA1/importin alpha5 and KPNA2/importin alpha1; these interactions can contribute to BAP1 nuclear localization but are less important than the interaction with TNPO1/transportin-1. The interaction with TNPO1/transportin-1 disrupts homodimerization and blocks ubiquitination by UBE2O. In terms of processing, ubiquitinated: monoubiquitinated at multiple sites within its nuclear localization signal (NLS) BY UBE2O, leading to cytoplasmic retention. Able to mediate autodeubiquitination via intramolecular interactions to counteract cytoplasmic retention. Monoubiquitinated on at least 4 sites near or within its PY-NLS. As to expression, highly expressed in testis, placenta and ovary. Expressed in breast. levels in the placenta increase over the course of pregnancy.

The protein resides in the cytoplasm. It is found in the nucleus. It localises to the chromosome. It catalyses the reaction Thiol-dependent hydrolysis of ester, thioester, amide, peptide and isopeptide bonds formed by the C-terminal Gly of ubiquitin (a 76-residue protein attached to proteins as an intracellular targeting signal).. Functionally, deubiquitinating enzyme that plays a key role in chromatin by mediating deubiquitination of histone H2A and HCFC1. Catalytic component of the polycomb repressive deubiquitinase (PR-DUB) complex, a complex that specifically mediates deubiquitination of histone H2A monoubiquitinated at 'Lys-120' (H2AK119ub1). Does not deubiquitinate monoubiquitinated histone H2B. The PR-DUB complex is an epigenetic regulator of gene expression and acts as a transcriptional coactivator, affecting genes involved in development, cell communication, signaling, cell proliferation and cell viability. Antagonizes PRC1 mediated H2AK119ub1 monoubiquitination. As part of the PR-DUB complex, associates with chromatin enriched in histone marks H3K4me1, H3K4me3, and H3K27Ac, but not in H3K27me3. Recruited to specific gene-regulatory regions by YY1. Acts as a regulator of cell growth by mediating deubiquitination of HCFC1 N-terminal and C-terminal chains, with some specificity toward 'Lys-48'-linked polyubiquitin chains compared to 'Lys-63'-linked polyubiquitin chains. Deubiquitination of HCFC1 does not lead to increase stability of HCFC1. Interferes with the BRCA1 and BARD1 heterodimer activity by inhibiting their ability to mediate ubiquitination and autoubiquitination. It however does not mediate deubiquitination of BRCA1 and BARD1. Able to mediate autodeubiquitination via intramolecular interactions to counteract monoubiquitination at the nuclear localization signal (NLS), thereby protecting it from cytoplasmic sequestration. Negatively regulates epithelial-mesenchymal transition (EMT) of trophoblast stem cells during placental development by regulating genes involved in epithelial cell integrity, cell adhesion and cytoskeletal organization. The sequence is that of Ubiquitin carboxyl-terminal hydrolase BAP1 from Homo sapiens (Human).